A 462-amino-acid chain; its full sequence is Gamma-aminobutyric acid receptor subunit alpha-5 (462 aa).

Residues 1–31 (MDNGMFSSFIMIKNLLLFCISMNLASHFGFS) form the signal peptide. Residues 32-260 (QMPTSSVKAE…FHLKRKIGYF (229 aa)) lie on the Extracellular side of the membrane. The N-linked (GlcNAc...) asparagine glycan is linked to N45. R101 serves as a coordination point for 4-aminobutanoate. N145 is a glycosylation site (N-linked (GlcNAc...) asparagine). A 4-aminobutanoate-binding site is contributed by T164. Residues C173 and C187 are joined by a disulfide bond. 2 N-linked (GlcNAc...) asparagine glycosylation sites follow: N207 and N236. The next 3 helical transmembrane spans lie at 261 to 281 (VIQTYLPCIMTVILSQVSFWL), 287 to 308 (PARTVFGVTTVLTMTTLSISAR), and 319 to 340 (AMDWFIAVCYAFVFSALIEFAT). The Cytoplasmic segment spans residues 341–427 (VNYFTKRGWA…TYNSISKIDK (87 aa)). Residue K355 forms a Glycyl lysine isopeptide (Lys-Gly) (interchain with G-Cter in ubiquitin) linkage. Positions 375–412 (TNAYTTGKMTHPPNIPKEQTPAGTTNASSASVKPEDKA) are disordered. Polar residues predominate over residues 395–405 (PAGTTNASSAS). A helical membrane pass occupies residues 428 to 448 (MSRIIFPLLFGTFNLVYWATY).

This sequence belongs to the ligand-gated ion channel (TC 1.A.9) family. Gamma-aminobutyric acid receptor (TC 1.A.9.5) subfamily. GABRA5 sub-subfamily. In terms of assembly, heteropentamer, formed by a combination of alpha (GABRA1-6), beta (GABRB1-3), gamma (GABRG1-3), delta (GABRD), epsilon (GABRE), rho (GABRR1-3), pi (GABRP) and theta (GABRQ) chains, each subunit exhibiting distinct physiological and pharmacological properties.

The protein resides in the postsynaptic cell membrane. Its subcellular location is the cell membrane. The catalysed reaction is chloride(in) = chloride(out). In terms of biological role, alpha subunit of the heteropentameric ligand-gated chloride channel gated by gamma-aminobutyric acid (GABA), a major inhibitory neurotransmitter in the brain. GABA-gated chloride channels, also named GABA(A) receptors (GABAAR), consist of five subunits arranged around a central pore and contain GABA active binding site(s) located at the alpha and beta subunit interface(s). When activated by GABA, GABAARs selectively allow the flow of chloride anions across the cell membrane down their electrochemical gradient. GABAARs containing alpha-5/GABRA5 subunits are mainly extrasynaptic and contribute to the tonic GABAergic inhibition in the hippocampus. Extrasynaptic alpha-5-containing GABAARs in CA1 pyramidal neurons play a role in learning and memory processes. This is Gamma-aminobutyric acid receptor subunit alpha-5 (GABRA5) from Bos taurus (Bovine).